The primary structure comprises 357 residues: Dual-specificity RNA methyltransferase RlmN (357 aa).

The Proton acceptor role is filled by Glu89. Residues 109–340 (EGEKYTVCVS…CTIRESKALD (232 aa)) form the Radical SAM core domain. An intrachain disulfide couples Cys116 to Cys345. Residues Cys123, Cys127, and Cys130 each coordinate [4Fe-4S] cluster. Residues 173–174 (GE), Ser203, 226–228 (SLH), and Asn302 each bind S-adenosyl-L-methionine. Cys345 functions as the S-methylcysteine intermediate in the catalytic mechanism.

This sequence belongs to the radical SAM superfamily. RlmN family. [4Fe-4S] cluster serves as cofactor.

Its subcellular location is the cytoplasm. The catalysed reaction is adenosine(2503) in 23S rRNA + 2 reduced [2Fe-2S]-[ferredoxin] + 2 S-adenosyl-L-methionine = 2-methyladenosine(2503) in 23S rRNA + 5'-deoxyadenosine + L-methionine + 2 oxidized [2Fe-2S]-[ferredoxin] + S-adenosyl-L-homocysteine. The enzyme catalyses adenosine(37) in tRNA + 2 reduced [2Fe-2S]-[ferredoxin] + 2 S-adenosyl-L-methionine = 2-methyladenosine(37) in tRNA + 5'-deoxyadenosine + L-methionine + 2 oxidized [2Fe-2S]-[ferredoxin] + S-adenosyl-L-homocysteine. In terms of biological role, specifically methylates position 2 of adenine 2503 in 23S rRNA and position 2 of adenine 37 in tRNAs. m2A2503 modification seems to play a crucial role in the proofreading step occurring at the peptidyl transferase center and thus would serve to optimize ribosomal fidelity. The polypeptide is Dual-specificity RNA methyltransferase RlmN (Helicobacter pylori (strain HPAG1)).